A 993-amino-acid polypeptide reads, in one-letter code: MATSSFNINELVASHGDKGLLATALVDKTAHEQLEEQLQHQRRGRKVYIRNVLGVKDSEVIRNRYGGKYDLHLTQQEFAPHGLAGALRLCETLDCLDSFPSSGLRQDLVLDFGGSWVTHYLRGHNVHCCSPCLGIRDKMRHAERLMNMRKIILNDPQQFDGRQPDFCTQPAADCKVQAHFAISIHGGYDMGFRGLCEAMNAHGTTILKGTMMFDGAMMFDDQGVIPELNCQWRKIRSAFSETEDVTPLVGKLNSTVFSRVRKFKTMVAFDFINESTMSYVHDWENIKSFLTDQTYSYRGMTYGIERCVIHAGIMTYKIIGVPGMCPPELIRHCIWFPSIKDYVGLKIPASQDLVEWKTVRILTSTLRETEEIAMRCYNDKKAWMEQFKVILGVLSAKSSTIVINGMSMQSGERIDINDYHYIGFAILLHTKMKYEQLGKMYDMWNASSISKWFAALTRPLRVFFSSVVHALFPTLRPREEKEFLIKLSTFVTFNEECSFDGGEEWDVISSAAYVATQAVTDGKILAAQKAEKLAEKLAQPVSEVSDSPETSSQTPDDTADVCGREREVSELDSLSAQTRSPITRVAERATAMLEYAAYEKQLHDTTVSNLKRIWNMAGGDDKRNSLEGNLKFVFDTYFTVDPMVNIHFSTGRWMRPVPEGIVYSVGYNERGLGPKSDGELYIVNSECVICNSESLSTVTRSLQAPTGTISQVDGVAGCGKTTAIKSIFEPSTDMIVTANKKSAQDVRMALFKSSDSKEACTFVRTADSVLLNECPTVSRVLVDEVVLLHFGQLCAVMSKLKAVRAICFGDSEQIAFSSRDASFDMRFSKIIPDETSDADTTFRSPQDVVPLVRLMATKALPKGTHSKYTKWVSQSKVKRSVTSRAIASVTLVDLDSSRFYITMTQADKASLISRAKEMNLPKTFWNERIKTVHESQGISEDHVTLVRLKSTKCDLFKQFSYCLVALTRHKVTFRYEYCGVLNGDLIAECVARA.

Residues 51–409 (NVLGVKDSEV…TIVINGMSMQ (359 aa)) are methyltransferase. An Alphavirus-like MT domain is found at 72–290 (HLTQQEFAPH…HDWENIKSFL (219 aa)). The interval 538-561 (AQPVSEVSDSPETSSQTPDDTADV) is disordered. A compositionally biased stretch (polar residues) spans 542–556 (SEVSDSPETSSQTPD). In terms of domain architecture, (+)RNA virus helicase ATP-binding spans 687-838 (CVICNSESLS…KIIPDETSDA (152 aa)). An ATP-dependent helicase region spans residues 712 to 975 (VDGVAGCGKT…LTRHKVTFRY (264 aa)). Residue 714–721 (GVAGCGKT) participates in ATP binding. The (+)RNA virus helicase C-terminal domain occupies 839 to 993 (DTTFRSPQDV…DLIAECVARA (155 aa)).

It belongs to the bromoviridae replication protein 1a family. Interacts with RNA-directed RNA polymerase 2a.

It is found in the host endoplasmic reticulum membrane. Involved in the virus replication. Contains a helicase domain and a methyltransferase domain. The methyltransferase domain is probably involved in viral RNA capping. Involved in the formation of ER membrane spherular invaginations in which RNA replication complexes form. The protein is Replication protein 1a of Cucumber mosaic virus (strain FNY) (CMV).